A 194-amino-acid chain; its full sequence is Peptidyl-tRNA hydrolase (194 aa).

Tyr-17 lines the tRNA pocket. His-22 functions as the Proton acceptor in the catalytic mechanism. TRNA is bound by residues Phe-68, Asn-70, and Asn-116.

The protein belongs to the PTH family. Monomer.

It is found in the cytoplasm. The catalysed reaction is an N-acyl-L-alpha-aminoacyl-tRNA + H2O = an N-acyl-L-amino acid + a tRNA + H(+). Its function is as follows. Hydrolyzes ribosome-free peptidyl-tRNAs (with 1 or more amino acids incorporated), which drop off the ribosome during protein synthesis, or as a result of ribosome stalling. In terms of biological role, catalyzes the release of premature peptidyl moieties from peptidyl-tRNA molecules trapped in stalled 50S ribosomal subunits, and thus maintains levels of free tRNAs and 50S ribosomes. The polypeptide is Peptidyl-tRNA hydrolase (Histophilus somni (strain 2336) (Haemophilus somnus)).